The chain runs to 475 residues: Ribulose bisphosphate carboxylase large chain (475 aa).

Residues 1–2 (MS) constitute a propeptide that is removed on maturation. Position 3 is an N-acetylproline (Pro3). At Lys14 the chain carries N6,N6,N6-trimethyllysine. 2 residues coordinate substrate: Asn123 and Thr173. The Proton acceptor role is filled by Lys175. Residue Lys177 participates in substrate binding. Residues Lys201, Asp203, and Glu204 each coordinate Mg(2+). Lys201 bears the N6-carboxylysine mark. His294 (proton acceptor) is an active-site residue. Arg295, His327, and Ser379 together coordinate substrate.

It belongs to the RuBisCO large chain family. Type I subfamily. In terms of assembly, heterohexadecamer of 8 large chains and 8 small chains; disulfide-linked. The disulfide link is formed within the large subunit homodimers. Mg(2+) serves as cofactor. Post-translationally, the disulfide bond which can form in the large chain dimeric partners within the hexadecamer appears to be associated with oxidative stress and protein turnover.

It is found in the plastid. The protein localises to the chloroplast. The catalysed reaction is 2 (2R)-3-phosphoglycerate + 2 H(+) = D-ribulose 1,5-bisphosphate + CO2 + H2O. It carries out the reaction D-ribulose 1,5-bisphosphate + O2 = 2-phosphoglycolate + (2R)-3-phosphoglycerate + 2 H(+). Its function is as follows. RuBisCO catalyzes two reactions: the carboxylation of D-ribulose 1,5-bisphosphate, the primary event in carbon dioxide fixation, as well as the oxidative fragmentation of the pentose substrate in the photorespiration process. Both reactions occur simultaneously and in competition at the same active site. This chain is Ribulose bisphosphate carboxylase large chain, found in Illicium oligandrum (Star anise).